Here is a 531-residue protein sequence, read N- to C-terminus: MGVKTILYQEDARKALERGMDILAEAVSVTLGPKGRNVVLEKKFGTPQIVNDGVTIAKEINLQDTLENTGVSLIRQAASKTNDVAGDGTTTATVLAYAIIKQGMRNVAAGANPIVLKRGIEKATQFVVRKIMDYARPIENLTDITQVAQISAGNDAEVGSLIANAIDKVGREGLISLEESKSTATELEITEGMGFDRGFISGYFVTNTERMEVVLDNPYILLTDKKITVVKQDLVPTLELVSKTNQPLLIISDNVEKEALATLIVNKLRGILNVVAVRAPGFGDRRKAILQDLAVLTGGDVITADAGLSLERMDIENLGVARRVVVGKENTTIISDSNKQEVLARCEQLRRQMETSDSTYEKEKLQERLAKLTGGVAVIKVGAATETEMKDRKLRLEDAVNATKAAVEEGIVPGGGTTLIHIAAELLEWVKETLTGDELLGGLIVEKALQAPLKKIALNAGENGSIIVERIKESDFEIGYNAATNEIVDMYEAGIIDPAKVTRSTLQNAASIASMILTTECIIVDKNKETK.

ATP-binding positions include 30–33, 87–91, G415, 481–483, and D497; these read TLGP, DGTTT, and NAA.

The protein belongs to the chaperonin (HSP60) family. As to quaternary structure, forms a cylinder of 14 subunits composed of two heptameric rings stacked back-to-back. Interacts with the co-chaperonin GroES.

It is found in the plastid. The protein localises to the chloroplast. It carries out the reaction ATP + H2O + a folded polypeptide = ADP + phosphate + an unfolded polypeptide.. Together with its co-chaperonin GroES, plays an essential role in assisting protein folding. The GroEL-GroES system forms a nano-cage that allows encapsulation of the non-native substrate proteins and provides a physical environment optimized to promote and accelerate protein folding. This is Chaperonin GroEL, chloroplastic from Emiliania huxleyi (Coccolithophore).